We begin with the raw amino-acid sequence, 399 residues long: Lysosomal acid lipase/cholesteryl ester hydrolase (399 aa).

The signal sequence occupies residues 1-27 (MKMRFLGLVVCLVLWTLHSEASGGKLT). Residues 28–76 (AVNPETNMNVSEIISYWGFPSEEYLVETEDGYILCLNRIPHGRKNHSDK) constitute a propeptide, removed in mature form. N-linked (GlcNAc...) asparagine glycosylation is found at Asn-36, Asn-72, Asn-101, and Asn-161. The region spanning 80-380 (PVVFLQHGLL…EWEHLDFIWG (301 aa)) is the AB hydrolase-1 domain. Ser-174 serves as the catalytic Charge relay system. Asn-273 and Asn-321 each carry an N-linked (GlcNAc...) asparagine glycan. His-374 functions as the Charge relay system in the catalytic mechanism.

It belongs to the AB hydrolase superfamily. Lipase family. In terms of assembly, monomer. Post-translationally, glycosylation is not essential for catalytic activity.

Its subcellular location is the lysosome. It carries out the reaction a sterol ester + H2O = a sterol + a fatty acid + H(+). The enzyme catalyses cholesteryl (9Z-octadecenoate) + H2O = cholesterol + (9Z)-octadecenoate + H(+). It catalyses the reaction a triacylglycerol + H2O = a 1,2-diacylglycerol + a fatty acid + H(+). The catalysed reaction is 1,2-di-(9Z-octadecenoyl)-glycerol + (9Z)-octadecenoate + H(+) = 1,2,3-tri-(9Z-octadecenoyl)-glycerol + H2O. It carries out the reaction a 1,2-diacylglycerol + H2O = a 1-acylglycerol + a fatty acid + H(+). The enzyme catalyses 1,2-di-(9Z-octadecenoyl)-glycerol + H2O = 1-(9Z-octadecenoyl)-glycerol + (9Z)-octadecenoate + H(+). It catalyses the reaction a 1,3-diacylglycerol + H2O = a 1-acylglycerol + a fatty acid + H(+). The catalysed reaction is 1,3-di-(9Z-octadecenoyl)-glycerol + H2O = 1-(9Z-octadecenoyl)-glycerol + (9Z)-octadecenoate + H(+). In terms of biological role, catalyzes the deacylation of cholesteryl ester core lipids of endocytosed low density lipoproteins to generate free fatty acids and cholesterol. Hydrolyzes triglycerides (1,2,3-triacylglycerol) and diglycerides (such as 1,2-diacylglycerol and 1,3-diacylglycerol) with preference for the acyl moieties at the sn-1 or sn-3 positions. The chain is Lysosomal acid lipase/cholesteryl ester hydrolase (LIPA) from Macaca fascicularis (Crab-eating macaque).